The primary structure comprises 299 residues: ATP phosphoribosyltransferase (299 aa).

The protein belongs to the ATP phosphoribosyltransferase family. Long subfamily. In terms of assembly, equilibrium between an active dimeric form, an inactive hexameric form and higher aggregates. Interconversion between the various forms is largely reversible and is influenced by the natural substrates and inhibitors of the enzyme. Mg(2+) is required as a cofactor.

The protein resides in the cytoplasm. The catalysed reaction is 1-(5-phospho-beta-D-ribosyl)-ATP + diphosphate = 5-phospho-alpha-D-ribose 1-diphosphate + ATP. It functions in the pathway amino-acid biosynthesis; L-histidine biosynthesis; L-histidine from 5-phospho-alpha-D-ribose 1-diphosphate: step 1/9. With respect to regulation, feedback inhibited by histidine. In terms of biological role, catalyzes the condensation of ATP and 5-phosphoribose 1-diphosphate to form N'-(5'-phosphoribosyl)-ATP (PR-ATP). Has a crucial role in the pathway because the rate of histidine biosynthesis seems to be controlled primarily by regulation of HisG enzymatic activity. In Buchnera aphidicola subsp. Schizaphis graminum (strain Sg), this protein is ATP phosphoribosyltransferase (hisG).